The primary structure comprises 293 residues: tRNA-cytidine(32) 2-sulfurtransferase (293 aa).

Positions 62 to 67 (SGGKDS) match the PP-loop motif motif. Residues Cys-137, Cys-140, and Cys-228 each coordinate [4Fe-4S] cluster.

The protein belongs to the TtcA family. Homodimer. It depends on Mg(2+) as a cofactor. Requires [4Fe-4S] cluster as cofactor.

The protein resides in the cytoplasm. It carries out the reaction cytidine(32) in tRNA + S-sulfanyl-L-cysteinyl-[cysteine desulfurase] + AH2 + ATP = 2-thiocytidine(32) in tRNA + L-cysteinyl-[cysteine desulfurase] + A + AMP + diphosphate + H(+). Its pathway is tRNA modification. Its function is as follows. Catalyzes the ATP-dependent 2-thiolation of cytidine in position 32 of tRNA, to form 2-thiocytidine (s(2)C32). The sulfur atoms are provided by the cysteine/cysteine desulfurase (IscS) system. The polypeptide is tRNA-cytidine(32) 2-sulfurtransferase (Brucella melitensis biotype 1 (strain ATCC 23456 / CCUG 17765 / NCTC 10094 / 16M)).